A 437-amino-acid polypeptide reads, in one-letter code: Enolase 1 (437 aa).

Residue Gln-164 coordinates (2R)-2-phosphoglycerate. Glu-206 functions as the Proton donor in the catalytic mechanism. Residues Asp-244, Glu-289, and Asp-316 each contribute to the Mg(2+) site. (2R)-2-phosphoglycerate is bound by residues Lys-341, Arg-370, Ser-371, and Lys-392. Lys-341 serves as the catalytic Proton acceptor.

It belongs to the enolase family. Requires Mg(2+) as cofactor.

It localises to the cytoplasm. The protein resides in the secreted. The protein localises to the cell surface. The enzyme catalyses (2R)-2-phosphoglycerate = phosphoenolpyruvate + H2O. It participates in carbohydrate degradation; glycolysis; pyruvate from D-glyceraldehyde 3-phosphate: step 4/5. In terms of biological role, catalyzes the reversible conversion of 2-phosphoglycerate (2-PG) into phosphoenolpyruvate (PEP). It is essential for the degradation of carbohydrates via glycolysis. This is Enolase 1 from Desulfitobacterium hafniense (strain Y51).